The following is a 223-amino-acid chain: MKPIIPPQNLSELLERANMMAGISLAQIAAHRGITVPKDLKRDKGWVGQLIEMELGATAGSKPEQDFLHLGVELKTIPIDSKGKPLETTYVCVAPLTNIEGLTWQDSLVCHKLQRVLWVPVEGERHIPVGERRVGTPILWEPDQQELALLQQDWEEIMELIALGKVEKLTARHGEVLQLRPKAANSKALTQSIAEDGGLKMTNPRGFYLKTAFTAMLLNKVFG.

It belongs to the MutH family.

The protein resides in the cytoplasm. Its function is as follows. Sequence-specific endonuclease that cleaves unmethylated GATC sequences. It is involved in DNA mismatch repair. The sequence is that of DNA mismatch repair protein MutH from Shewanella sp. (strain MR-7).